The sequence spans 251 residues: 5-oxoprolinase subunit A (251 aa).

It belongs to the LamB/PxpA family. Forms a complex composed of PxpA, PxpB and PxpC.

It catalyses the reaction 5-oxo-L-proline + ATP + 2 H2O = L-glutamate + ADP + phosphate + H(+). Its function is as follows. Catalyzes the cleavage of 5-oxoproline to form L-glutamate coupled to the hydrolysis of ATP to ADP and inorganic phosphate. The chain is 5-oxoprolinase subunit A from Vibrio campbellii (strain ATCC BAA-1116).